The sequence spans 53 residues: uncharacterized protein (53 aa).

This is an uncharacterized protein from Dictyostelium discoideum (Social amoeba).